A 486-amino-acid polypeptide reads, in one-letter code: Ribosomal RNA small subunit methyltransferase F (486 aa).

Residues Ala-124–Lys-130, Glu-148, Asp-175, and Asp-193 contribute to the S-adenosyl-L-methionine site. The active-site Nucleophile is Cys-246.

Belongs to the class I-like SAM-binding methyltransferase superfamily. RsmB/NOP family.

It localises to the cytoplasm. The enzyme catalyses cytidine(1407) in 16S rRNA + S-adenosyl-L-methionine = 5-methylcytidine(1407) in 16S rRNA + S-adenosyl-L-homocysteine + H(+). In terms of biological role, specifically methylates the cytosine at position 1407 (m5C1407) of 16S rRNA. This Shewanella baltica (strain OS155 / ATCC BAA-1091) protein is Ribosomal RNA small subunit methyltransferase F.